A 227-amino-acid chain; its full sequence is Fibrillarin-like rRNA/tRNA 2'-O-methyltransferase (227 aa).

S-adenosyl-L-methionine is bound by residues 86-87 (TT), 105-106 (EF), 130-131 (DA), and 150-153 (DVAQ).

Belongs to the methyltransferase superfamily. Fibrillarin family. In terms of assembly, interacts with nop5. Component of box C/D small ribonucleoprotein (sRNP) particles that contain rpl7ae, FlpA and nop5, plus a guide RNA. These sRNP particles form homodimers, giving rise to an asymmetric holoenzyme.

Functionally, involved in pre-rRNA and tRNA processing. Utilizes the methyl donor S-adenosyl-L-methionine to catalyze the site-specific 2'-hydroxyl methylation of ribose moieties in rRNA and tRNA. Site specificity is provided by a guide RNA that base pairs with the substrate. Methylation occurs at a characteristic distance from the sequence involved in base pairing with the guide RNA. This is Fibrillarin-like rRNA/tRNA 2'-O-methyltransferase from Pyrococcus furiosus (strain ATCC 43587 / DSM 3638 / JCM 8422 / Vc1).